A 119-amino-acid polypeptide reads, in one-letter code: Flagellar transcriptional regulator FlhD (119 aa).

The protein belongs to the FlhD family. Homodimer; disulfide-linked. Forms a heterohexamer composed of two FlhC and four FlhD subunits. Each FlhC binds a FlhD dimer, forming a heterotrimer, and a hexamer assembles by dimerization of two heterotrimers.

It localises to the cytoplasm. Functions in complex with FlhC as a master transcriptional regulator that regulates transcription of several flagellar and non-flagellar operons by binding to their promoter region. Activates expression of class 2 flagellar genes, including fliA, which is a flagellum-specific sigma factor that turns on the class 3 genes. Also regulates genes whose products function in a variety of physiological pathways. In Escherichia fergusonii (strain ATCC 35469 / DSM 13698 / CCUG 18766 / IAM 14443 / JCM 21226 / LMG 7866 / NBRC 102419 / NCTC 12128 / CDC 0568-73), this protein is Flagellar transcriptional regulator FlhD.